A 421-amino-acid chain; its full sequence is Testin (421 aa).

The 108-residue stretch at Met92–Asp199 folds into the PET domain. Residues Glu133–Cys164 are disordered. Over residues Pro155 to Cys164 the composition is skewed to basic and acidic residues. 3 LIM zinc-binding domains span residues Tyr234 to Glu297, Pro299 to Val359, and Gln362 to Ser421.

This sequence belongs to the prickle / espinas / testin family. As to quaternary structure, interacts via LIM domain 1 with ZYX. Interacts (via LIM domain 3) with ENAH and VASP. Interacts with ALKBH4, talin, actin, alpha-actinin, GRIP1 and PXN. Interacts (via LIM domain 2) with ACTL7A (via N-terminus). Heterodimer with ACTL7A; the heterodimer interacts with ENAH to form a heterotrimer.

It localises to the cytoplasm. The protein resides in the cell junction. The protein localises to the focal adhesion. Functionally, scaffold protein that may play a role in cell adhesion, cell spreading and in the reorganization of the actin cytoskeleton. Plays a role in the regulation of cell proliferation. May act as a tumor suppressor. In Ateles geoffroyi (Black-handed spider monkey), this protein is Testin (TES).